The chain runs to 232 residues: 5'-methylthioadenosine/S-adenosylhomocysteine nucleosidase (232 aa).

Glutamate 12 (proton acceptor) is an active-site residue. Residues glycine 78, isoleucine 152, and 173–174 contribute to the substrate site; that span reads ME. The active-site Proton donor is the aspartate 197.

Belongs to the PNP/UDP phosphorylase family. MtnN subfamily. Homodimer.

The catalysed reaction is S-adenosyl-L-homocysteine + H2O = S-(5-deoxy-D-ribos-5-yl)-L-homocysteine + adenine. It carries out the reaction S-methyl-5'-thioadenosine + H2O = 5-(methylsulfanyl)-D-ribose + adenine. It catalyses the reaction 5'-deoxyadenosine + H2O = 5-deoxy-D-ribose + adenine. Its pathway is amino-acid biosynthesis; L-methionine biosynthesis via salvage pathway; S-methyl-5-thio-alpha-D-ribose 1-phosphate from S-methyl-5'-thioadenosine (hydrolase route): step 1/2. Catalyzes the irreversible cleavage of the glycosidic bond in both 5'-methylthioadenosine (MTA) and S-adenosylhomocysteine (SAH/AdoHcy) to adenine and the corresponding thioribose, 5'-methylthioribose and S-ribosylhomocysteine, respectively. Also cleaves 5'-deoxyadenosine, a toxic by-product of radical S-adenosylmethionine (SAM) enzymes, into 5-deoxyribose and adenine. Thus, is required for in vivo function of the radical SAM enzymes biotin synthase and lipoic acid synthase, that are inhibited by 5'-deoxyadenosine accumulation. In Salmonella agona (strain SL483), this protein is 5'-methylthioadenosine/S-adenosylhomocysteine nucleosidase.